The primary structure comprises 175 residues: Alpha-crystallin B chain (175 aa).

The residue at position 1 (M1) is an N-acetylmethionine. S19 carries the phosphoserine modification. O-linked (GlcNAc) serine glycosylation occurs at S41. S45 and S59 each carry phosphoserine. One can recognise a sHSP domain in the interval 56-164 (RAPSWFDTGL…PERTIPITRE (109 aa)). A Zn(2+)-binding site is contributed by H83. Position 92 is an N6-acetyllysine; partial (K92). H104, E106, H111, and H119 together coordinate Zn(2+). The interval 146 to 175 (NGPRKQVSGPERTIPITREEKPAVTAAPKK) is disordered. K166 bears the N6-acetyllysine mark. T170 is a glycosylation site (O-linked (GlcNAc) threonine).

This sequence belongs to the small heat shock protein (HSP20) family. Heteromer composed of three CRYAA and one CRYAB subunits. Aggregates with homologous proteins, including the small heat shock protein HSPB1, to form large heteromeric complexes. Inter-subunit bridging via zinc ions enhances stability, which is crucial as there is no protein turn over in the lens. Interacts with HSPBAP1 and TTN/titin. Interacts with TMEM109; in the cellular response to DNA damage. Interacts with DES; binds rapidly during early stages of DES filament assembly and a reduced binding seen in the later stages. Interacts with TMED10; the interaction mediates the translocation from the cytoplasm into the ERGIC (endoplasmic reticulum-Golgi intermediate compartment) and thereby secretion. Interacts with ATP6V1A and with MTOR, forming a ternary complex. In terms of tissue distribution, lens as well as other tissues. Expressed in myocardial tissue.

It localises to the cytoplasm. The protein resides in the nucleus. Its subcellular location is the secreted. It is found in the lysosome. In terms of biological role, may contribute to the transparency and refractive index of the lens. Has chaperone-like activity, preventing aggregation of various proteins under a wide range of stress conditions. In lens epithelial cells, stabilizes the ATP6V1A protein, preventing its degradation by the proteasome. This Homo sapiens (Human) protein is Alpha-crystallin B chain.